The following is a 174-amino-acid chain: MSVVIINTGCANLSSVKYAIHRLGYNPVISTSRREILRSKKIFFPGVGTAHSAMHALKKLNLLNIIKDVQQPFLGICLGMQLLGSYSEESQGMHTLDIINFPVCALKSEKFPVPHNGWNNVEVCKNNILFNGIKNNSKFYFLHSYVVHVNEYTIAKTAYNICFSAAVNKDNFWR.

One can recognise a Glutamine amidotransferase type-1 domain in the interval 2 to 174; sequence SVVIINTGCA…AAVNKDNFWR (173 aa). The active-site Nucleophile is the Cys-77.

In terms of assembly, heterodimer of HisH and HisF.

It is found in the cytoplasm. The enzyme catalyses 5-[(5-phospho-1-deoxy-D-ribulos-1-ylimino)methylamino]-1-(5-phospho-beta-D-ribosyl)imidazole-4-carboxamide + L-glutamine = D-erythro-1-(imidazol-4-yl)glycerol 3-phosphate + 5-amino-1-(5-phospho-beta-D-ribosyl)imidazole-4-carboxamide + L-glutamate + H(+). It catalyses the reaction L-glutamine + H2O = L-glutamate + NH4(+). The protein operates within amino-acid biosynthesis; L-histidine biosynthesis; L-histidine from 5-phospho-alpha-D-ribose 1-diphosphate: step 5/9. Its function is as follows. IGPS catalyzes the conversion of PRFAR and glutamine to IGP, AICAR and glutamate. The HisH subunit catalyzes the hydrolysis of glutamine to glutamate and ammonia as part of the synthesis of IGP and AICAR. The resulting ammonia molecule is channeled to the active site of HisF. The sequence is that of Imidazole glycerol phosphate synthase subunit HisH (hisH) from Buchnera aphidicola subsp. Schlechtendalia chinensis.